Reading from the N-terminus, the 287-residue chain is Large ribosomal subunit protein uL2 (287 aa).

Residues 221–287 (RGSVMNPCDH…SKRSRGGRDS (67 aa)) are disordered. Residues 258–287 (KTRKRNKPSNRFVLRKRRRVSKRSRGGRDS) are compositionally biased toward basic residues.

Belongs to the universal ribosomal protein uL2 family. In terms of assembly, part of the 50S ribosomal subunit. Forms a bridge to the 30S subunit in the 70S ribosome.

Functionally, one of the primary rRNA binding proteins. Required for association of the 30S and 50S subunits to form the 70S ribosome, for tRNA binding and peptide bond formation. It has been suggested to have peptidyltransferase activity; this is somewhat controversial. Makes several contacts with the 16S rRNA in the 70S ribosome. The chain is Large ribosomal subunit protein uL2 from Prochlorococcus marinus (strain SARG / CCMP1375 / SS120).